We begin with the raw amino-acid sequence, 67 residues long: Large ribosomal subunit protein bL32 (67 aa).

Residues 1–19 (MAVPKRKMSRANTRARRAQ) are compositionally biased toward basic residues. Residues 1–20 (MAVPKRKMSRANTRARRAQW) form a disordered region.

The protein belongs to the bacterial ribosomal protein bL32 family.

The protein is Large ribosomal subunit protein bL32 of Paenarthrobacter aurescens (strain TC1).